Reading from the N-terminus, the 290-residue chain is Glutaredoxin domain-containing cysteine-rich protein 1 (290 aa).

In terms of domain architecture, Glutaredoxin spans 127–234 (LQQPSADLEF…DLLTKIERVQ (108 aa)).

It belongs to the GRXCR1 family. As to expression, in the inner ear, expressed predominantly in sensory hair cells and their stereocilia bundles with higher levels in outer hair cells (OHC) at P1 and in inner hair cells (IHC) at P5. At P1, expression is prominent in each row of stereocilia within bundles including immature shorter stereocilia. Expression is also observed in apical microvilli of sensory cells at P1 and in kinocilia at P1 and P5. In the adult, expression is localized throughout the length of the stereocilia of both OHC and IHC (at protein level).

It localises to the cell projection. It is found in the stereocilium. The protein resides in the microvillus. The protein localises to the kinocilium. In terms of biological role, may play a role in actin filament architecture in developing stereocilia of sensory cells. This chain is Glutaredoxin domain-containing cysteine-rich protein 1 (Grxcr1), found in Mus musculus (Mouse).